The primary structure comprises 137 residues: Large ribosomal subunit protein uL13 (137 aa).

Belongs to the universal ribosomal protein uL13 family. In terms of assembly, part of the 50S ribosomal subunit.

This protein is one of the early assembly proteins of the 50S ribosomal subunit, although it is not seen to bind rRNA by itself. It is important during the early stages of 50S assembly. The polypeptide is Large ribosomal subunit protein uL13 (Methanococcus maripaludis (strain DSM 14266 / JCM 13030 / NBRC 101832 / S2 / LL)).